A 525-amino-acid chain; its full sequence is Cytochrome P450 4V2 (525 aa).

The helical transmembrane segment at 14–34 (LLWGAASAVSLAGATILISIF) threads the bilayer. Residues Glu-329 and Cys-467 each contribute to the heme site.

Belongs to the cytochrome P450 family. The cofactor is heme.

It localises to the endoplasmic reticulum membrane. It catalyses the reaction dodecanoate + reduced [NADPH--hemoprotein reductase] + O2 = 12-hydroxydodecanoate + oxidized [NADPH--hemoprotein reductase] + H2O + H(+). The catalysed reaction is tetradecanoate + reduced [NADPH--hemoprotein reductase] + O2 = 14-hydroxytetradecanoate + oxidized [NADPH--hemoprotein reductase] + H2O + H(+). The enzyme catalyses hexadecanoate + reduced [NADPH--hemoprotein reductase] + O2 = 16-hydroxyhexadecanoate + oxidized [NADPH--hemoprotein reductase] + H2O + H(+). It carries out the reaction (5Z,8Z,11Z,14Z,17Z)-eicosapentaenoate + reduced [NADPH--hemoprotein reductase] + O2 = 20-hydroxy-(5Z,8Z,11Z,14Z,17Z)-eicosapentaenoate + oxidized [NADPH--hemoprotein reductase] + H2O + H(+). It catalyses the reaction (4Z,7Z,10Z,13Z,16Z,19Z)-docosahexaenoate + reduced [NADPH--hemoprotein reductase] + O2 = 22-hydroxy-(4Z,7Z,10Z,13Z,16Z,19Z)-docosahexaenoate + oxidized [NADPH--hemoprotein reductase] + H2O + H(+). The protein operates within lipid metabolism; fatty acid metabolism. With respect to regulation, inhibited by N-hydroxy-N'-(4-n-butyl-2-methylphenyl formamidine)(HET0016) with an IC(50) of 38 nM. Its function is as follows. A cytochrome P450 monooxygenase involved in fatty acid metabolism in the eye. Catalyzes the omega-hydroxylation of polyunsaturated fatty acids (PUFAs) docosahexaenoate (DHA) and its precursor eicosapentaenoate (EPA), and may contribute to the homeostasis of these retinal PUFAs. Omega hydroxylates saturated fatty acids such as laurate, myristate and palmitate, the catalytic efficiency decreasing in the following order: myristate &gt; laurate &gt; palmitate (C14&gt;C12&gt;C16). Mechanistically, uses molecular oxygen inserting one oxygen atom into a substrate, and reducing the second into a water molecule, with two electrons provided by NADPH via cytochrome P450 reductase (CPR; NADPH-ferrihemoprotein reductase). This is Cytochrome P450 4V2 (Cyp4v2) from Mus musculus (Mouse).